A 205-amino-acid chain; its full sequence is Dephospho-CoA kinase (205 aa).

The DPCK domain occupies 4–203 (KIGITGGIGS…QKIHYLCSAK (200 aa)). Position 12 to 17 (12 to 17 (GSGKSV)) interacts with ATP.

This sequence belongs to the CoaE family.

Its subcellular location is the cytoplasm. It catalyses the reaction 3'-dephospho-CoA + ATP = ADP + CoA + H(+). It functions in the pathway cofactor biosynthesis; coenzyme A biosynthesis; CoA from (R)-pantothenate: step 5/5. Functionally, catalyzes the phosphorylation of the 3'-hydroxyl group of dephosphocoenzyme A to form coenzyme A. In Bacteroides fragilis (strain YCH46), this protein is Dephospho-CoA kinase.